The following is a 95-amino-acid chain: Opiscorpine-2 (95 aa).

The N-terminal stretch at 1–19 (MNNKLTALIFHGLLAIASC) is a signal peptide. Residues 55 to 95 (EFMCMANMDPTGSCETHCQKASGEKGYCHGTKCKCGVPLSY) form the BetaSPN-type CS-alpha/beta domain. Intrachain disulfides connect Cys58–Cys82, Cys68–Cys87, and Cys72–Cys89.

Belongs to the long chain scorpion toxin family. Class 3 subfamily. As to expression, expressed by the venom gland.

The protein resides in the secreted. Has antimicrobial activity against yeasts and bacteria. The sequence is that of Opiscorpine-2 from Opistophthalmus carinatus (African yellow leg scorpion).